Here is a 403-residue protein sequence, read N- to C-terminus: Acetyl-CoA acetyltransferase 2 (403 aa).

The Acyl-thioester intermediate role is filled by Cys-97. Lys-237 contacts CoA. Ala-254 lines the K(+) pocket. Position 258 (Ser-258) interacts with CoA. Val-355 lines the K(+) pocket. Residues His-359 and Cys-389 each act as proton acceptor in the active site.

This sequence belongs to the thiolase-like superfamily. Thiolase family. As to expression, expressed in root tips, emerging leaves, young leaves, stems, and anthers at the microspore stage.

Its subcellular location is the cytoplasm. It is found in the peroxisome. It catalyses the reaction 2 acetyl-CoA = acetoacetyl-CoA + CoA. The protein operates within metabolic intermediate biosynthesis; (R)-mevalonate biosynthesis; (R)-mevalonate from acetyl-CoA: step 1/3. Its function is as follows. Catalyzes the condensation of two molecules of acetyl-CoA to produce acetoacetyl-CoA. Generates the bulk of the acetoacetyl-CoA precursor required for the cytosol-localized, mevalonate-derived isoprenoid biosynthesis. The generated isoprenoids are required for normal growth and development. Essential protein during embryogenesis. This Arabidopsis thaliana (Mouse-ear cress) protein is Acetyl-CoA acetyltransferase 2.